An 865-amino-acid chain; its full sequence is Leucine-rich repeat-containing protein 66 (865 aa).

The chain crosses the membrane as a helical span at residues Phe-4 to Pro-24. Asn-42 is a glycosylation site (N-linked (GlcNAc...) asparagine). LRR repeat units lie at residues Arg-138 to Lys-160, Pro-161 to Gly-182, Gln-185 to Gly-206, Lys-209 to Ala-230, and Asn-235 to Gln-255. A glycan (N-linked (GlcNAc...) asparagine) is linked at Asn-248. The chain crosses the membrane as a helical span at residues Ala-366–Phe-386. Disordered regions lie at residues Arg-463 to His-522 and Asp-654 to Val-749. Residues Met-470 to Gly-479 show a composition bias toward polar residues. Over residues Ala-675–Leu-688 the composition is skewed to basic and acidic residues. The span at Phe-702–Arg-713 shows a compositional bias: polar residues. A phosphoserine mark is found at Ser-714 and Ser-748. The LRRNT domain occupies Ser-728–Glu-759. The N-linked (GlcNAc...) asparagine glycan is linked to Asn-787. The disordered stretch occupies residues Phe-840–Lys-865. The span at Asp-855–Lys-865 shows a compositional bias: acidic residues.

It is found in the membrane. The polypeptide is Leucine-rich repeat-containing protein 66 (Lrrc66) (Rattus norvegicus (Rat)).